Reading from the N-terminus, the 121-residue chain is Insertion element IS406 uncharacterized 13.3 kDa protein (121 aa).

The sequence is that of Insertion element IS406 uncharacterized 13.3 kDa protein from Burkholderia multivorans (strain ATCC 17616 / 249).